A 248-amino-acid polypeptide reads, in one-letter code: UPF0246 protein RC0754 (248 aa).

This sequence belongs to the UPF0246 family.

In Rickettsia conorii (strain ATCC VR-613 / Malish 7), this protein is UPF0246 protein RC0754.